The chain runs to 208 residues: ATP synthase subunit b 1 (208 aa).

Residues 1 to 18 (MFVSTAFAQTATESQPAS) show a composition bias toward polar residues. Positions 1–26 (MFVSTAFAQTATESQPASTAGEHGAA) are disordered. A helical transmembrane segment spans residues 56-78 (SQVLWLAITFGLFYLFLSRVVLP).

It belongs to the ATPase B chain family. As to quaternary structure, F-type ATPases have 2 components, F(1) - the catalytic core - and F(0) - the membrane proton channel. F(1) has five subunits: alpha(3), beta(3), gamma(1), delta(1), epsilon(1). F(0) has three main subunits: a(1), b(2) and c(10-14). The alpha and beta chains form an alternating ring which encloses part of the gamma chain. F(1) is attached to F(0) by a central stalk formed by the gamma and epsilon chains, while a peripheral stalk is formed by the delta and b chains.

The protein localises to the cell inner membrane. F(1)F(0) ATP synthase produces ATP from ADP in the presence of a proton or sodium gradient. F-type ATPases consist of two structural domains, F(1) containing the extramembraneous catalytic core and F(0) containing the membrane proton channel, linked together by a central stalk and a peripheral stalk. During catalysis, ATP synthesis in the catalytic domain of F(1) is coupled via a rotary mechanism of the central stalk subunits to proton translocation. In terms of biological role, component of the F(0) channel, it forms part of the peripheral stalk, linking F(1) to F(0). The polypeptide is ATP synthase subunit b 1 (Brucella abortus (strain 2308)).